The following is a 507-amino-acid chain: ATP synthase subunit alpha, chloroplastic (507 aa).

170–177 (GDRQTGKT) provides a ligand contact to ATP.

The protein belongs to the ATPase alpha/beta chains family. As to quaternary structure, F-type ATPases have 2 components, CF(1) - the catalytic core - and CF(0) - the membrane proton channel. CF(1) has five subunits: alpha(3), beta(3), gamma(1), delta(1), epsilon(1). CF(0) has four main subunits: a, b, b' and c.

The protein localises to the plastid. The protein resides in the chloroplast thylakoid membrane. The enzyme catalyses ATP + H2O + 4 H(+)(in) = ADP + phosphate + 5 H(+)(out). Functionally, produces ATP from ADP in the presence of a proton gradient across the membrane. The alpha chain is a regulatory subunit. In Nymphaea alba (White water-lily), this protein is ATP synthase subunit alpha, chloroplastic.